A 156-amino-acid chain; its full sequence is Ribosomal RNA large subunit methyltransferase H (156 aa).

Residues Leu73, Gly104, and 123 to 128 (VSSLTL) each bind S-adenosyl-L-methionine.

This sequence belongs to the RNA methyltransferase RlmH family. Homodimer.

The protein resides in the cytoplasm. The catalysed reaction is pseudouridine(1915) in 23S rRNA + S-adenosyl-L-methionine = N(3)-methylpseudouridine(1915) in 23S rRNA + S-adenosyl-L-homocysteine + H(+). In terms of biological role, specifically methylates the pseudouridine at position 1915 (m3Psi1915) in 23S rRNA. The chain is Ribosomal RNA large subunit methyltransferase H from Paraburkholderia phymatum (strain DSM 17167 / CIP 108236 / LMG 21445 / STM815) (Burkholderia phymatum).